The primary structure comprises 218 residues: ATP synthase subunit a (218 aa).

The next 5 membrane-spanning stretches (helical) occupy residues 17–37 (IYSTVVNTWIIMILLLAGIFL), 75–95 (YLPLVATLFIFILSLNLSWFI), 104–124 (DLSTTAAFAVTTIILVQIFGI), 162–184 (LFGNLFGEEMVVTILFLMIPFLL), and 196–216 (GTIQAFVFTLLTITYIANFVH).

Belongs to the ATPase A chain family. As to quaternary structure, F-type ATPases have 2 components, CF(1) - the catalytic core - and CF(0) - the membrane proton channel. CF(1) has five subunits: alpha(3), beta(3), gamma(1), delta(1), epsilon(1). CF(0) has three main subunits: a(1), b(2) and c(9-12). The alpha and beta chains form an alternating ring which encloses part of the gamma chain. CF(1) is attached to CF(0) by a central stalk formed by the gamma and epsilon chains, while a peripheral stalk is formed by the delta and b chains. In this bacterium the a and b subunits are transcribed but do not seem to be translated, thus the ATP synthase consists of the alpha, beta, gamma, delta, epsilon and c subunits.

The protein localises to the cell membrane. Its function is as follows. Key component of the proton channel; it plays a direct role in the translocation of protons across the membrane. The chain is ATP synthase subunit a from Moorella thermoacetica (strain ATCC 39073 / JCM 9320).